We begin with the raw amino-acid sequence, 695 residues long: A-kinase anchor protein 17A (695 aa).

Residues 83–112 (VENKSLVKSFLACLDGKTIKLSGFSDILKV) are PKA-RI and PKA-RII subunit binding domain. Lys118 participates in a covalent cross-link: Glycyl lysine isopeptide (Lys-Gly) (interchain with G-Cter in SUMO1); alternate. Lys118 is covalently cross-linked (Glycyl lysine isopeptide (Lys-Gly) (interchain with G-Cter in SUMO2); alternate). The region spanning 147–256 (DTIHLEGLPC…KAVACNIKVS (110 aa)) is the RRM domain. Positions 279–337 (QELEQQREEQKRREKEAEERQRAEERKQKELEELERERKREEKLRKREQKQRDRELRRN) are disordered. The PKA-RI-alpha subunit binding domain stretch occupies residues 425–454 (LGLQRKERELRERLLSILLSKKPDDSHTHD). Residues 482-695 (TTLHPLGGQP…PSRHRSTWNR (214 aa)) form a disordered region. The residue at position 537 (Ser537) is a Phosphoserine. A compositionally biased stretch (basic and acidic residues) spans 567–585 (VSRKDTRSEQDKCNREPSK). Basic residues-rich tracts occupy residues 598 to 609 (RHKRERSRARRA) and 618 to 628 (RKERRPHKKHA). Residues 629 to 644 (YKDDSPRRRSTSPDHT) are compositionally biased toward basic and acidic residues. Ser633 bears the Phosphoserine mark. Composition is skewed to basic residues over residues 645-658 (RSRR…HRRE) and 666-695 (SASR…TWNR).

As to quaternary structure, monomer. Component of the spliceosome. Interacts with ZRANB2 and SFRS1/ASF through its Arg/Ser-rich domain. Interacts with RI and RII subunits of PKA. In terms of tissue distribution, widely expressed. Found in heart, brain, lung, liver, skeletal muscle, kidney and pancreas. Expressed in activated B-cells and placenta. Expressed in all cell lines tested including Jurkat-TAg, U-937 and HEK293 cells.

It localises to the nucleus speckle. In terms of biological role, splice factor regulating alternative splice site selection for certain mRNA precursors. Mediates regulation of pre-mRNA splicing in a PKA-dependent manner. This Homo sapiens (Human) protein is A-kinase anchor protein 17A (AKAP17A).